The sequence spans 563 residues: MDTKTLIASEIAKVVPELEQDAIFNLLETPKNSDMGDLAFPAFSLAKVLRKAPQMIASELAEQIDESQFEKVVAVGPYINFFLDKVKISSQVLEQVITAGSDYAQQDEGQGRNVAIDMSSPNIAKPFSIGHLRSTVIGDSLANIFAKMGYQPVKINHLGDWGKQFGMLIVAYKKWGDEAAVQAHPIDELLKLYVRINAEAEIDPTVDEEAREWFRKLEDGDKEATELWQWFRDESLLEFNRLYDQLHVTFDSYNGEAFYNDKMDEVLALLEAKNLLVESKGAQVVTLEKYGIAPPPLIKKSDGATLHITRALAPALYRKRTYDFAKSVYVVGNEQAAHFKQLKAVLKEMGYDWSDDMTHVAFGLVTKGGAKLSTRKGNVILLEPTVAEAINRAASQIEAKNPNLADKEAVAHAVGVGAIKFYDLKTDRMNGYDFDLEAMVSFEGETGPYVQYAHARIQSILRKADFTPSATTTYSLADAESWEIIKLIQDFPRIIKRTSDNFEPSIMAKFAINLAQSFNKYYAHTRILDDNSERDNRLVLCYATATVLKEALRLLGVDAPNEM.

A 'HIGH' region motif is present at residues 121 to 131; the sequence is PNIAKPFSIGH.

Belongs to the class-I aminoacyl-tRNA synthetase family. As to quaternary structure, monomer.

It localises to the cytoplasm. The catalysed reaction is tRNA(Arg) + L-arginine + ATP = L-arginyl-tRNA(Arg) + AMP + diphosphate. The protein is Arginine--tRNA ligase of Streptococcus pyogenes serotype M49 (strain NZ131).